Reading from the N-terminus, the 235-residue chain is Phosphoribosylaminoimidazole-succinocarboxamide synthase (235 aa).

The protein belongs to the SAICAR synthetase family.

It carries out the reaction 5-amino-1-(5-phospho-D-ribosyl)imidazole-4-carboxylate + L-aspartate + ATP = (2S)-2-[5-amino-1-(5-phospho-beta-D-ribosyl)imidazole-4-carboxamido]succinate + ADP + phosphate + 2 H(+). It participates in purine metabolism; IMP biosynthesis via de novo pathway; 5-amino-1-(5-phospho-D-ribosyl)imidazole-4-carboxamide from 5-amino-1-(5-phospho-D-ribosyl)imidazole-4-carboxylate: step 1/2. The polypeptide is Phosphoribosylaminoimidazole-succinocarboxamide synthase (Streptococcus pneumoniae (strain JJA)).